A 201-amino-acid polypeptide reads, in one-letter code: ATP-dependent Clp protease proteolytic subunit (201 aa).

Ser-98 acts as the Nucleophile in catalysis. The active site involves His-123.

It belongs to the peptidase S14 family. In terms of assembly, fourteen ClpP subunits assemble into 2 heptameric rings which stack back to back to give a disk-like structure with a central cavity, resembling the structure of eukaryotic proteasomes.

The protein resides in the cytoplasm. It catalyses the reaction Hydrolysis of proteins to small peptides in the presence of ATP and magnesium. alpha-casein is the usual test substrate. In the absence of ATP, only oligopeptides shorter than five residues are hydrolyzed (such as succinyl-Leu-Tyr-|-NHMec, and Leu-Tyr-Leu-|-Tyr-Trp, in which cleavage of the -Tyr-|-Leu- and -Tyr-|-Trp bonds also occurs).. Functionally, cleaves peptides in various proteins in a process that requires ATP hydrolysis. Has a chymotrypsin-like activity. Plays a major role in the degradation of misfolded proteins. In Rickettsia canadensis (strain McKiel), this protein is ATP-dependent Clp protease proteolytic subunit.